A 470-amino-acid chain; its full sequence is Velvet complex subunit B (470 aa).

2 disordered regions span residues 1–148 (MNSS…EEGT) and 223–321 (VRSS…NPLF). Residues 15-37 (PGPGYSSSVPPPIHAYQQQQQHQ) are compositionally biased toward low complexity. Pro residues predominate over residues 38–49 (HPPPSLLPPPPT). Over residues 74–86 (HQHHAPPPPHHHS) the composition is skewed to basic residues. Pro residues predominate over residues 102-124 (NQYPRPHPLPPSRNDEPPPPSSE). In terms of domain architecture, Velvet spans 147–452 (GTGLKYSLDV…ALQGIKIPIR (306 aa)). Low complexity predominate over residues 232–241 (GASSNNYSYS). Polar residues predominate over residues 242–255 (TLEPSTPSYQQQAL). Residues 280–301 (QQGYGQAPSYQSSSSYGPPQQY) are compositionally biased toward low complexity. Residues 307–318 (GYNTDPPASSAN) are compositionally biased toward polar residues.

It belongs to the velvet family. VelB subfamily. As to quaternary structure, component of the heterotrimeric velvet complex composed of laeA, veA and velB; VeA acting as a bridging protein between laeA and velB. Forms a heterodimeric complex with vosA; the formation of the velB-vosA complex is light-dependent.

The protein resides in the nucleus. The protein localises to the cytoplasm. In terms of biological role, component of the velvet transcription factor complex that controls sexual/asexual developmental ratio in response to light, promoting sexual development in the darkness while stimulating asexual sporulation under illumination. The velvet complex acts as a global regulator for secondary metabolite gene expression. Component of the velB-VosA heterodimeric complex that plays a dual role in activating genes associated with spore maturation and repressing certain development-associated genes. The complex binds DNA through the DNA-binding domain of vosA that recognizes an 11-nucleotide consensus sequence 5'-CTGGCCGCGGC-3' consisting of two motifs in the promoters of key developmental regulatory genes. Controls the expression of the pink pigment aurofusarin and the mycotoxin deoxynivalenol gene clusters. Regulates hyphae formation, hyphal hydrophobicity and conidiation. Regulates of cell wall integrity and pathogenicity. In Gibberella zeae (strain ATCC MYA-4620 / CBS 123657 / FGSC 9075 / NRRL 31084 / PH-1) (Wheat head blight fungus), this protein is Velvet complex subunit B.